The primary structure comprises 418 residues: Sonic hedgehog protein (418 aa).

The first 23 residues, 1–23, serve as a signal peptide directing secretion; sequence MRLLTRVLLVSLLTLSLVVSGLA. Residue C24 is the site of N-palmitoyl cysteine attachment. A Cardin-Weintraub motif is present at residues 32–38; it reads RRRHPKK. Ca(2+) contacts are provided by E89, E90, D95, T125, E126, D129, and D131. Zn(2+) is bound by residues H140, D147, and H182. A lipid anchor (Cholesterol glycine ester) is attached at G197.

It belongs to the hedgehog family. Interacts with HHATL/GUP1 which negatively regulates HHAT-mediated palmitoylation of the SHH N-terminus. Interacts with BOC and CDON. Interacts with HHIP. Interacts with DISP1 via its cholesterol anchor. Interacts with SCUBE2. As to quaternary structure, multimer. The C-terminal domain displays an autoproteolysis activity and a cholesterol transferase activity. Both activities result in the cleavage of the full-length protein and covalent attachment of a cholesterol moiety to the C-terminal of the newly generated N-terminal fragment (ShhN). Cholesterylation is required for the sonic hedgehog protein N-product targeting to lipid rafts and multimerization. ShhN is the active species in both local and long-range signaling, whereas the C-product (ShhC) is degraded in the reticulum endoplasmic. In terms of processing, N-palmitoylation by HHAT of ShhN is required for sonic hedgehog protein N-product multimerization and full activity. It is a prerequisite for the membrane-proximal positioning and the subsequent shedding of this N-terminal peptide. Post-translationally, the lipidated N- and C-terminal peptides of ShhNp can be cleaved (shedding). The N-terminal palmitoylated peptide is cleaved at the Cardin-Weintraub (CW) motif site. The cleavage reduced the interactions with heparan sulfate. The cleavage is enhanced by SCUBE2. In terms of tissue distribution, expressed in the ventral midline of the neural tube and brain. Also found in the notochord and in developing fin bud. In the developing brain, expression occurs in domains that include a discrete region in the floor of the diencephalon.

The protein resides in the endoplasmic reticulum membrane. It is found in the golgi apparatus membrane. It localises to the cell membrane. It catalyses the reaction glycyl-L-cysteinyl-[protein] + cholesterol + H(+) = [protein]-C-terminal glycyl cholesterol ester + N-terminal L-cysteinyl-[protein]. In terms of biological role, the C-terminal part of the sonic hedgehog protein precursor displays an autoproteolysis and a cholesterol transferase activity. Both activities result in the cleavage of the full-length protein into two parts (ShhN and ShhC) followed by the covalent attachment of a cholesterol moiety to the C-terminal of the newly generated ShhN. Both activities occur in the endoplasmic reticulum. Once cleaved, ShhC is degraded in the endoplasmic reticulum. The dually lipidated sonic hedgehog protein N-product (ShhNp) is a morphogen which is essential for a variety of patterning events during development. Involved in dorso-ventral patterning of the brain and in early patterning of the developing eyes. Binds to the patched (PTCH1) receptor, which functions in association with smoothened (SMO), to activate the transcription of target genes. In the absence of SHH, PTCH1 represses the constitutive signaling activity of SMO. The polypeptide is Sonic hedgehog protein (shha) (Danio rerio (Zebrafish)).